The chain runs to 199 residues: Recombination protein RecR (199 aa).

The C4-type zinc finger occupies 57–72 (CEICGNMDTENICRIC). A Toprim domain is found at 80–175 (SVIAIVETVA…KISRLASGIP (96 aa)).

The protein belongs to the RecR family.

May play a role in DNA repair. It seems to be involved in an RecBC-independent recombinational process of DNA repair. It may act with RecF and RecO. This Rickettsia canadensis (strain McKiel) protein is Recombination protein RecR.